The primary structure comprises 520 residues: Maturase K (520 aa).

Belongs to the intron maturase 2 family. MatK subfamily.

It is found in the plastid. The protein localises to the chloroplast. Functionally, usually encoded in the trnK tRNA gene intron. Probably assists in splicing its own and other chloroplast group II introns. In Galanthus elwesii (Giant snowdrop), this protein is Maturase K.